We begin with the raw amino-acid sequence, 238 residues long: Inactive glycoside hydrolase XLP1 (238 aa).

Residues 1 to 19 (MKSFLIAIVIAVLLPVSAA) form the signal peptide. The active site involves Glu133. Residues Asn171 and Asn187 are each glycosylated (N-linked (GlcNAc...) asparagine). Glu219 is an active-site residue.

Belongs to the glycosyl hydrolase 12 (cellulase H) family. As to quaternary structure, interacts with host apoplastic glucanase inhibitor GIP2.

Its subcellular location is the secreted. In terms of biological role, non-functional secreted XEG1-like protein that binds to host Nicotiana benthamiana apoplastic glucanase inhibitor protein GIP2 more tightly than does XEG1, thus it outcompetes XEG1 for GIP2 binding and frees functional XEG1 to support P.parasitica infection. With XEG1, is required to elevate apoplastic sugar during P.parasitica infection. The sequence is that of Inactive glycoside hydrolase XLP1 from Phytophthora nicotianae (strain INRA-310) (Phytophthora parasitica).